Consider the following 345-residue polypeptide: Phosphoribosylformylglycinamidine cyclo-ligase (345 aa).

It belongs to the AIR synthase family.

It localises to the cytoplasm. The enzyme catalyses 2-formamido-N(1)-(5-O-phospho-beta-D-ribosyl)acetamidine + ATP = 5-amino-1-(5-phospho-beta-D-ribosyl)imidazole + ADP + phosphate + H(+). The protein operates within purine metabolism; IMP biosynthesis via de novo pathway; 5-amino-1-(5-phospho-D-ribosyl)imidazole from N(2)-formyl-N(1)-(5-phospho-D-ribosyl)glycinamide: step 2/2. The protein is Phosphoribosylformylglycinamidine cyclo-ligase of Synechococcus sp. (strain CC9605).